The sequence spans 338 residues: Holliday junction branch migration complex subunit RuvB (338 aa).

The tract at residues 1 to 22 is disordered; sequence MVDDERVVSPETADDHEDSVEK. A large ATPase domain (RuvB-L) region spans residues 4-185; it reads DERVVSPETA…FGIVEHMAYY (182 aa). ATP-binding positions include Leu-24, Arg-25, Gly-66, Lys-69, Thr-70, Thr-71, 132–134, Arg-175, Tyr-185, and Arg-222; that span reads EDF. Position 70 (Thr-70) interacts with Mg(2+). The segment at 186 to 257 is small ATPAse domain (RuvB-S); that stretch reads ETTDLQEIVL…IVDHALDLLR (72 aa). Positions 260 to 338 are head domain (RuvB-H); it reads SAGLDATDIK…HLGRTMPDNN (79 aa). The DNA site is built by Arg-315 and Arg-320.

This sequence belongs to the RuvB family. Homohexamer. Forms an RuvA(8)-RuvB(12)-Holliday junction (HJ) complex. HJ DNA is sandwiched between 2 RuvA tetramers; dsDNA enters through RuvA and exits via RuvB. An RuvB hexamer assembles on each DNA strand where it exits the tetramer. Each RuvB hexamer is contacted by two RuvA subunits (via domain III) on 2 adjacent RuvB subunits; this complex drives branch migration. In the full resolvosome a probable DNA-RuvA(4)-RuvB(12)-RuvC(2) complex forms which resolves the HJ.

The protein localises to the cytoplasm. The catalysed reaction is ATP + H2O = ADP + phosphate + H(+). In terms of biological role, the RuvA-RuvB-RuvC complex processes Holliday junction (HJ) DNA during genetic recombination and DNA repair, while the RuvA-RuvB complex plays an important role in the rescue of blocked DNA replication forks via replication fork reversal (RFR). RuvA specifically binds to HJ cruciform DNA, conferring on it an open structure. The RuvB hexamer acts as an ATP-dependent pump, pulling dsDNA into and through the RuvAB complex. RuvB forms 2 homohexamers on either side of HJ DNA bound by 1 or 2 RuvA tetramers; 4 subunits per hexamer contact DNA at a time. Coordinated motions by a converter formed by DNA-disengaged RuvB subunits stimulates ATP hydrolysis and nucleotide exchange. Immobilization of the converter enables RuvB to convert the ATP-contained energy into a lever motion, pulling 2 nucleotides of DNA out of the RuvA tetramer per ATP hydrolyzed, thus driving DNA branch migration. The RuvB motors rotate together with the DNA substrate, which together with the progressing nucleotide cycle form the mechanistic basis for DNA recombination by continuous HJ branch migration. Branch migration allows RuvC to scan DNA until it finds its consensus sequence, where it cleaves and resolves cruciform DNA. The chain is Holliday junction branch migration complex subunit RuvB from Levilactobacillus brevis (strain ATCC 367 / BCRC 12310 / CIP 105137 / JCM 1170 / LMG 11437 / NCIMB 947 / NCTC 947) (Lactobacillus brevis).